Consider the following 414-residue polypeptide: Lysosome-associated membrane glycoprotein 1 (414 aa).

A signal peptide spans 1 to 18 (MGGAARAVLLGFLQASSS). The segment at 19-181 (FDVRDSTGKV…SANKTECRED (163 aa)) is first lumenal domain. Over 19-379 (FDVRDSTGKV…EECQLDENNM (361 aa)) the chain is Lumenal. Cysteine 29 and cysteine 67 are joined by a disulfide. N-linked (GlcNAc...) asparagine glycans are attached at residues asparagine 33, asparagine 58, asparagine 71, asparagine 90, asparagine 108, asparagine 117, asparagine 154, asparagine 159, asparagine 168, and asparagine 174. Cysteine 142 and cysteine 178 are disulfide-bonded. Residues 182-224 (MVSTTTVAPTTPKHATSQVPTTSPAPTAAPSSPAVGKYNVTGA) are hinge. The segment at 186 to 213 (TTVAPTTPKHATSQVPTTSPAPTAAPSS) is disordered. Over residues 196–213 (ATSQVPTTSPAPTAAPSS) the composition is skewed to low complexity. 7 N-linked (GlcNAc...) asparagine glycosylation sites follow: asparagine 220, asparagine 225, asparagine 238, asparagine 259, asparagine 289, asparagine 301, and asparagine 319. A second lumenal domain region spans residues 225–379 (NGTCVLASMG…EECQLDENNM (155 aa)). Cysteine 228 and cysteine 266 are disulfide-bonded. A disulfide bridge connects residues cysteine 335 and cysteine 372. The helical transmembrane segment at 380–403 (LIPIIVGAALAGLVLIVLIAYLIG) threads the bilayer. Over 404–414 (RKRSHAGYQTI) the chain is Cytoplasmic.

It belongs to the LAMP family.

Its subcellular location is the lysosome membrane. It is found in the endosome membrane. It localises to the late endosome membrane. The protein resides in the cell membrane. The protein localises to the cytolytic granule membrane. Its function is as follows. Lysosomal membrane glycoprotein which plays an important role in lysosome biogenesis, lysosomal pH regulation, autophagy and cholesterol homeostasis. In terms of biological role, (Microbial infection) Plays an essential role in efficient replication and spread of Marek's disease virus, by facilitating viral cell-to-cell spread. The chain is Lysosome-associated membrane glycoprotein 1 (LAMP1) from Gallus gallus (Chicken).